Reading from the N-terminus, the 298-residue chain is Acetylglutamate kinase (298 aa).

Substrate-binding positions include 69–70, R91, and N196; that span reads GG.

It belongs to the acetylglutamate kinase family. ArgB subfamily.

It is found in the cytoplasm. It carries out the reaction N-acetyl-L-glutamate + ATP = N-acetyl-L-glutamyl 5-phosphate + ADP. Its pathway is amino-acid biosynthesis; L-arginine biosynthesis; N(2)-acetyl-L-ornithine from L-glutamate: step 2/4. In terms of biological role, catalyzes the ATP-dependent phosphorylation of N-acetyl-L-glutamate. The protein is Acetylglutamate kinase of Nitrobacter winogradskyi (strain ATCC 25391 / DSM 10237 / CIP 104748 / NCIMB 11846 / Nb-255).